The chain runs to 431 residues: 5-methylthioadenosine/S-adenosylhomocysteine deaminase (431 aa).

Residues His66 and His68 each contribute to the Zn(2+) site. Substrate contacts are provided by Glu95, Arg147, and His185. His212 serves as a coordination point for Zn(2+). 2 residues coordinate substrate: Glu215 and Asp300. Asp300 provides a ligand contact to Zn(2+).

It belongs to the metallo-dependent hydrolases superfamily. MTA/SAH deaminase family. The cofactor is Zn(2+).

It carries out the reaction S-adenosyl-L-homocysteine + H2O + H(+) = S-inosyl-L-homocysteine + NH4(+). It catalyses the reaction S-methyl-5'-thioadenosine + H2O + H(+) = S-methyl-5'-thioinosine + NH4(+). Catalyzes the deamination of 5-methylthioadenosine and S-adenosyl-L-homocysteine into 5-methylthioinosine and S-inosyl-L-homocysteine, respectively. Is also able to deaminate adenosine. In Acetivibrio thermocellus (strain ATCC 27405 / DSM 1237 / JCM 9322 / NBRC 103400 / NCIMB 10682 / NRRL B-4536 / VPI 7372) (Clostridium thermocellum), this protein is 5-methylthioadenosine/S-adenosylhomocysteine deaminase.